A 4318-amino-acid chain; its full sequence is Cytoplasmic dynein 2 heavy chain 1 (4318 aa).

The interval 1–1658 is stem; sequence MPAEDARKEY…IMRMVDAEFQ (1658 aa). An ATP-binding site is contributed by 147-154; the sequence is LKSLVRKQ. Coiled-coil stretches lie at residues 1328-1354 and 1402-1431; these read DKAT…QRKW and LRTT…RSIL. AAA regions lie at residues 1659 to 1883, 1951 to 2171, 2261 to 2515, and 2623 to 2871; these read YTYE…VLRG, DAIR…RQGD, ASDF…WVLG, and TFAR…SSSV. 1697–1704 contributes to the ATP binding site; that stretch reads GPAGTGKT. A coiled-coil region spans residues 1959–1986; that stretch reads EHNLVVMETQVKKALELYEQLRQRMGVV. ATP is bound by residues 1989–1996, 2301–2308, and 2661–2668; these read GPSGSGKS, GPDGCGKG, and GRSGVGRR. The stalk stretch occupies residues 2888-3176; sequence DVYRRKKQGV…YELEKEQETI (289 aa). Coiled coils occupy residues 2908–2989 and 3423–3480; these read VAKL…AEIE and QHEK…KTKE. 2 AAA regions span residues 3251 to 3487 and 3699 to 3914; these read LSTE…TITQ and MTFF…IIDR.

It belongs to the dynein heavy chain family. In terms of assembly, the cytoplasmic dynein complex 2 is probably composed by a heavy chain DYH1B homodimer and a number of light intermediate chains.

It is found in the cytoplasm. Its subcellular location is the cytoskeleton. The protein localises to the cilium axoneme. The protein resides in the cell membrane. Its function is as follows. May function as a motor for intraflagellar retrograde transport. Functions in cilia biogenesis. The sequence is that of Cytoplasmic dynein 2 heavy chain 1 (DYH1B) from Tripneustes gratilla (Hawaian sea urchin).